The primary structure comprises 477 residues: Delayed-rectifier potassium channel regulatory subunit KCNS2 (477 aa).

The Cytoplasmic segment spans residues 1–184 (MTRQSLWDLS…LALDNPGYSV (184 aa)). A helical membrane pass occupies residues 185–206 (LSRVFSVLSILVVLGSIITMCL). The Extracellular portion of the chain corresponds to 207 to 225 (NSLPDFQIPDSQGNPGEDP). The chain crosses the membrane as a helical span at residues 226-248 (RFEIVEHFGIAWFTFELVARFAV). The Cytoplasmic portion of the chain corresponds to 249–259 (APDFLKFFKNA). A helical membrane pass occupies residues 260 to 280 (LNLIDLMSIVPFYITLVVNLV). The Extracellular segment spans residues 281–290 (VESSPTLANL). A helical; Voltage-sensor membrane pass occupies residues 291-311 (GRVAQVLRLMRIFRILKLARH). Topologically, residues 312–326 (STGLRSLGATLKYSY) are cytoplasmic. A helical membrane pass occupies residues 327 to 348 (KEVGLLLLYLSVGISIFSVVAY). Over 349–361 (TIEKEENEGLATI) the chain is Extracellular. The helical intramembrane region spans 362–373 (PACWWWATVSMT). A Selectivity filter motif is present at residues 374-379 (TVGYGD). The stretch at 374–381 (TVGYGDVV) is an intramembrane region. Residues 382 to 388 (PGTTAGK) lie on the Extracellular side of the membrane. Residues 389 to 417 (LTASACILAGILVVVLPITLIFNKFSHFY) form a helical membrane-spanning segment. Over 418–477 (RRQKQLESAMRSCDFGDGMKEVPSVNLRDYYAHKVKSLMASLTNMSRSSPSELSLDDSLH) the chain is Cytoplasmic.

It belongs to the potassium channel family. S (TC 1.A.1.2) subfamily. Kv9.2/KCNS2 sub-subfamily. Heterotetramer with KCNB1 and KCNB2. Does not form homomultimers. In terms of tissue distribution, detected in brain, lung and in pulmonary arteries.

It localises to the cell membrane. Potassium channel regulatory subunit that modulate the delayed rectifier voltage-gated potassium channel activity of KCNB1 and KCNB2 by altering their kinetics, expression levels, and shifting the half-inactivation potential to more polarized values. While it does not form functional channels on its own, it can form functional heterotetrameric channels with KCNB1 and KCNB2. Each regulatory subunit has unique regulatory properties that can lead to extensive inhibition, significant changes in kinetics, and/or substantial shifts in the voltage dependencies of the inactivation process. The polypeptide is Delayed-rectifier potassium channel regulatory subunit KCNS2 (Rattus norvegicus (Rat)).